A 75-amino-acid chain; its full sequence is Large ribosomal subunit protein bL28 (75 aa).

Belongs to the bacterial ribosomal protein bL28 family.

This Buchnera aphidicola subsp. Acyrthosiphon pisum (strain 5A) protein is Large ribosomal subunit protein bL28.